Consider the following 120-residue polypeptide: uncharacterized protein (120 aa).

It is found in the virion. This is an uncharacterized protein from Acanthamoeba polyphaga mimivirus (APMV).